Here is an 804-residue protein sequence, read N- to C-terminus: Probable replication endonuclease from prophage-like region (804 aa).

Catalysis depends on O-(5'-phospho-DNA)-tyrosine intermediate residues Tyr498 and Tyr502.

The protein belongs to the phage GPA family.

Possible endonuclease which induces a single-strand cut and initiates DNA replication. The protein is Probable replication endonuclease from prophage-like region of Escherichia coli O6:H1 (strain CFT073 / ATCC 700928 / UPEC).